The primary structure comprises 405 residues: GTPase Obg (405 aa).

The region spanning 1–159 is the Obg domain; it reads MRFIDEAVVT…KVLKFELKVV (159 aa). The region spanning 160–333 is the OBG-type G domain; that stretch reads ADVGLIGLPN…IKYHLMNEIE (174 aa). Residues 166–173, 191–195, 213–216, 283–286, and 314–316 each bind GTP; these read GLPNAGKS, FTTLV, DIPG, NKID, and ATL. 2 residues coordinate Mg(2+): Ser173 and Thr193. A compositionally biased stretch (basic and acidic residues) spans 371 to 382; that stretch reads YRAARKAAREGT. The tract at residues 371 to 405 is disordered; it reads YRAARKAAREGTDLSDDDFDGSDDDDDGVEVIYAP. A compositionally biased stretch (acidic residues) spans 383–399; it reads DLSDDDFDGSDDDDDGV.

It belongs to the TRAFAC class OBG-HflX-like GTPase superfamily. OBG GTPase family. As to quaternary structure, monomer. It depends on Mg(2+) as a cofactor.

It localises to the cytoplasm. An essential GTPase which binds GTP, GDP and possibly (p)ppGpp with moderate affinity, with high nucleotide exchange rates and a fairly low GTP hydrolysis rate. Plays a role in control of the cell cycle, stress response, ribosome biogenesis and in those bacteria that undergo differentiation, in morphogenesis control. This Psychrobacter arcticus (strain DSM 17307 / VKM B-2377 / 273-4) protein is GTPase Obg.